A 130-amino-acid polypeptide reads, in one-letter code: T-cell receptor alpha chain V region PHDS58 (130 aa).

Residues 1-20 (MLLALLPVLGIHFVLRDAQA) form the signal peptide. Positions 21–114 (QSVTQPDARV…SAVYFCAVSG (94 aa)) are v segment. N90 is a glycosylation site (N-linked (GlcNAc...) asparagine). The segment at 115-130 (FASALTFGSGTKVIVL) is j segment.

The polypeptide is T-cell receptor alpha chain V region PHDS58 (Mus musculus (Mouse)).